Consider the following 253-residue polypeptide: Distal tail protein (253 aa).

As to quaternary structure, homohexamer.

The protein localises to the virion. Forms a 40 Angstroms wide channel at the distal tip of the tail. Remains associated to the tail after DNA ejection. This chain is Distal tail protein, found in Bacillus phage SPP1 (Bacteriophage SPP1).